A 274-amino-acid polypeptide reads, in one-letter code: Type III pantothenate kinase (274 aa).

6-13 is an ATP binding site; that stretch reads DVGNTNTV. Residues Tyr110 and 117 to 120 contribute to the substrate site; that span reads GADR. Asp119 serves as the catalytic Proton acceptor. Asp139 is a K(+) binding site. Residue Thr142 participates in ATP binding. Thr194 is a binding site for substrate.

This sequence belongs to the type III pantothenate kinase family. As to quaternary structure, homodimer. NH4(+) serves as cofactor. K(+) is required as a cofactor.

It localises to the cytoplasm. The enzyme catalyses (R)-pantothenate + ATP = (R)-4'-phosphopantothenate + ADP + H(+). It participates in cofactor biosynthesis; coenzyme A biosynthesis; CoA from (R)-pantothenate: step 1/5. Catalyzes the phosphorylation of pantothenate (Pan), the first step in CoA biosynthesis. The protein is Type III pantothenate kinase of Koribacter versatilis (strain Ellin345).